We begin with the raw amino-acid sequence, 404 residues long: Putative transporter AmpG 2 (404 aa).

The next 12 membrane-spanning stretches (helical) occupy residues 11–31 (IYNILFILFISLPGGLIYLLT), 49–69 (IGLFSLVNFIHIFKFLWGPLL), 84–104 (YCLIFSLLSCICCVYILTGFN), 109–129 (FISFSLCLIILAFFSSIYDML), 154–174 (FRIGILISGSGALYLSTIISW), 177–197 (VYRTMAILCVPSLLLIIFYPL), 224–244 (WLIIVGFMLLYRLQDNFLAVM), 261–281 (LGYKAFGMCATIAGGFIGGFL), 294–311 (VLVYHALSSITFLLLYSY), 315–337 (ITTLYIAVFLQEFTKGLTMSPFF), 353–373 (IALITSIAYISTVLFGSISGY), and 378–398 (LGWGYFFAIASFCFIPAYILI).

The protein belongs to the major facilitator superfamily.

It is found in the cell inner membrane. In Rickettsia bellii (strain RML369-C), this protein is Putative transporter AmpG 2 (ampG2).